A 391-amino-acid polypeptide reads, in one-letter code: MIGTPYTEGARRAMLLGCGELGKEVAIELQRLGVEVIGVDRYPNAPAMQIAHRSHVINMLDAKALRAIIELEKPHLVIPEIEAIATQTLVEMEAEGLNVVPTARATQLTMDREGIRRLAAETLGLPTSPYFFCDTETEFNQAIGKIGVPCVVKPVMSSSGKGQSVIRDVSQSAKAWQYAQEGGRAGGGRVIVEGFIPFDYEITLLTISAVNGIHFCAPIGHRQEDGDYRESWQPQAMSADVLAKSQAIASKVVEALGGYGLFGVELFVKGNDVYFSEVSPRPHDTGLVTLISQDLSEFALHVRAILGLPIPNIHQHGPSASAVVLVEGKSKNIRYQGLADALAAENTQLRLFAKPEIDGRRRLGVALARDKDIESAVNKALDSASKVKVIF.

N(1)-(5-phospho-beta-D-ribosyl)glycinamide-binding positions include 20 to 21 and Glu-80; that span reads EL. Residues Arg-112, Lys-153, 158–163, 193–196, and Glu-201 each bind ATP; these read SSGKGQ and EGFI. Positions 117 to 306 constitute an ATP-grasp domain; the sequence is RLAAETLGLP…EFALHVRAIL (190 aa). The Mg(2+) site is built by Glu-265 and Glu-277. N(1)-(5-phospho-beta-D-ribosyl)glycinamide-binding positions include Asp-284, Lys-354, and 361–362; that span reads RR.

Belongs to the PurK/PurT family. In terms of assembly, homodimer.

The catalysed reaction is N(1)-(5-phospho-beta-D-ribosyl)glycinamide + formate + ATP = N(2)-formyl-N(1)-(5-phospho-beta-D-ribosyl)glycinamide + ADP + phosphate + H(+). The protein operates within purine metabolism; IMP biosynthesis via de novo pathway; N(2)-formyl-N(1)-(5-phospho-D-ribosyl)glycinamide from N(1)-(5-phospho-D-ribosyl)glycinamide (formate route): step 1/1. Functionally, involved in the de novo purine biosynthesis. Catalyzes the transfer of formate to 5-phospho-ribosyl-glycinamide (GAR), producing 5-phospho-ribosyl-N-formylglycinamide (FGAR). Formate is provided by PurU via hydrolysis of 10-formyl-tetrahydrofolate. In Shewanella sp. (strain MR-7), this protein is Formate-dependent phosphoribosylglycinamide formyltransferase.